A 597-amino-acid chain; its full sequence is MKHIRNFSIIAHIDHGKSTLSDRLIQTCGGLSSREMQAQVLDSMDLERERGITIKAQSVTLNYQAQDGNTYQLNFIDTPGHVDFSYEVSRSLAACEGALLVVDAGQGVEAQTLANCYTAMEMELEVVPVLNKIDLPAAEPERVAEEIEDIVGIDAIDAVRCSAKTGLGVDLVLEEIVARIPAPVGDPDAPLQALIIDSWFDSYLGVVSLVRIKNGSLKKNDKIKVMSTGQVWGVDRIGIFTPKQVDTQGLGCGEVGWVVCGIKDIHGAPVGDTLTQAKNGAEKALAGFKKVKPQVYAGLFPISSDDYESFRDALDKLSLNDASLFFEPESSTALGFGFRCGFLGMLHMEIIQERLEREYDLDLITTAPTVVYEIELNDGSTIHIDSPSAMPPVNNIKEMREPIAECNILLPQEYMGNVITLCIEKRGVQTNMVYHGNQVALTYEIPMAEVVLDFFDRLKSTSRGYASLDYGFKRFETSEMVRLDIMINGERVDALAIITHKENAQYRGRQVVEKMRELIPRQMFDIAIQASIGNQIIARSTVKALRKDVTAKCYGGDVSRKKKLLNKQKEGKKRMKSLGRVDVPQEAFLAILHVGKD.

The tr-type G domain maps to 2-184 (KHIRNFSIIA…EIVARIPAPV (183 aa)). Residues 14–19 (DHGKST) and 131–134 (NKID) contribute to the GTP site.

Belongs to the TRAFAC class translation factor GTPase superfamily. Classic translation factor GTPase family. LepA subfamily.

Its subcellular location is the cell inner membrane. The catalysed reaction is GTP + H2O = GDP + phosphate + H(+). Functionally, required for accurate and efficient protein synthesis under certain stress conditions. May act as a fidelity factor of the translation reaction, by catalyzing a one-codon backward translocation of tRNAs on improperly translocated ribosomes. Back-translocation proceeds from a post-translocation (POST) complex to a pre-translocation (PRE) complex, thus giving elongation factor G a second chance to translocate the tRNAs correctly. Binds to ribosomes in a GTP-dependent manner. This chain is Elongation factor 4, found in Aeromonas salmonicida (strain A449).